The chain runs to 523 residues: NAD(P)H-quinone oxidoreductase subunit 2 (523 aa).

Transmembrane regions (helical) follow at residues V30–G50, W57–W77, L94–W114, A128–V148, L182–L202, A223–F243, P255–L275, L291–Q311, M317–T337, V345–F365, L389–G409, V424–I444, and V477–F497.

The protein belongs to the complex I subunit 2 family. NDH-1 can be composed of about 15 different subunits; different subcomplexes with different compositions have been identified which probably have different functions.

The protein resides in the cellular thylakoid membrane. It catalyses the reaction a plastoquinone + NADH + (n+1) H(+)(in) = a plastoquinol + NAD(+) + n H(+)(out). The catalysed reaction is a plastoquinone + NADPH + (n+1) H(+)(in) = a plastoquinol + NADP(+) + n H(+)(out). Functionally, NDH-1 shuttles electrons from an unknown electron donor, via FMN and iron-sulfur (Fe-S) centers, to quinones in the respiratory and/or the photosynthetic chain. The immediate electron acceptor for the enzyme in this species is believed to be plastoquinone. Couples the redox reaction to proton translocation, and thus conserves the redox energy in a proton gradient. Cyanobacterial NDH-1 also plays a role in inorganic carbon-concentration. The protein is NAD(P)H-quinone oxidoreductase subunit 2 of Synechococcus sp. (strain CC9311).